A 347-amino-acid chain; its full sequence is Cyclic AMP-dependent transcription factor ATF-4 (347 aa).

The interval 202 to 296 is disordered; it reads TPQCVKEEDT…AATRYRQKKR (95 aa). Thr211 carries the post-translational modification Phosphothreonine. Ser213, Ser217, Ser222, Ser229, and Ser233 each carry phosphoserine. A BetaTrCP degron motif motif is present at residues 213–222; that stretch reads SDSDSGICMS. Positions 228–238 are enriched in polar residues; it reads GSPQHSPSTSR. Pro234 bears the 4-hydroxyproline mark. Ser243 and Ser246 each carry phosphoserine. Glycyl lysine isopeptide (Lys-Gly) (interchain with G-Cter in SUMO2) cross-links involve residues Lys256 and Lys268. The span at 269–283 shows a compositional bias: basic and acidic residues; it reads VKTEKLDKKLKKMEQ. Residues 274–337 enclose the bZIP domain; sequence LDKKLKKMEQ…QYLKDLIEEV (64 aa). The segment at 276-296 is basic motif; sequence KKLKKMEQNKTAATRYRQKKR. Positions 301–337 are interaction with GABBR1; sequence ALTGECKELEKKNEALKEKADSLAKEIQYLKDLIEEV. Positions 302–330 are leucine-zipper; it reads LTGECKELEKKNEALKEKADSLAKEIQYL. The residue at position 307 (Lys307) is an N6-acetyllysine.

It belongs to the bZIP family. Binds DNA as a homodimer and as a heterodimer. Heterodimer; heterodimerizes with CEBPB. Heterodimer; heterodimerizes with DDIT3/CHOP. Interacts with CEP290 (via an N-terminal region). Interacts with NEK6, DAPK2 (isoform 2) and ZIPK/DAPK3. Interacts (via its leucine zipper domain) with GABBR1 and GABBR2 (via their C-termini). Forms a heterodimer with TXLNG in osteoblasts. Interacts (via its DNA binding domain) with FOXO1 (C-terminal half); the interaction occurs in osteoblasts and regulates glucose homeostasis through suppression of beta-cell proliferation and a decrease in insulin production. Interacts with SATB2; the interaction results in enhanced DNA binding and transactivation by these transcription factors. Interacts with ABRAXAS2. Interacts with TRIB3, inhibiting the transactivation activity of ATF4. Interacts with DISC1; which inhibits ATF4 transcription factor activity by disrupting ATF4 dimerization and DNA-binding. Interacts with EP300/p300; EP300/p300 stabilizes ATF4 and increases its transcriptional activity independently of its catalytic activity by preventing its ubiquitination. Ubiquitinated by SCF(BTRC) in response to mTORC1 signal, followed by proteasomal degradation and leading to down-regulate expression of SIRT4. Interaction with EP300/p300 inhibits ubiquitination by SCF(BTRC). Post-translationally, phosphorylation at Ser-243 by RPS6KA3/RSK2 in osteoblasts enhances transactivation activity and promotes osteoblast differentiation. Phosphorylated on the betaTrCP degron motif at Ser-217, followed by phosphorylation at Thr-211, Ser-222, Ser-229, Ser-233 and Ser-246, promoting interaction with BTRC and ubiquitination. Phosphorylation is promoted by mTORC1. Phosphorylation at Ser-213 by CK2 decreases its stability. Phosphorylated by NEK6. In terms of processing, hydroxylated by PHD3, leading to decreased protein stability. As to expression, expressed in brain, heart, liver, spleen, lung and muscle, but not testis.

Its subcellular location is the nucleus. It is found in the nucleus speckle. It localises to the cytoplasm. The protein resides in the cell membrane. The protein localises to the cytoskeleton. Its subcellular location is the microtubule organizing center. It is found in the centrosome. Transcription factor that binds the cAMP response element (CRE) (consensus: 5'-GTGACGT[AC][AG]-3') and displays two biological functions, as regulator of metabolic and redox processes under normal cellular conditions, and as master transcription factor during integrated stress response (ISR). Binds to asymmetric CRE's as a heterodimer and to palindromic CRE's as a homodimer. Core effector of the ISR, which is required for adaptation to various stress such as endoplasmic reticulum (ER) stress, amino acid starvation, mitochondrial stress or oxidative stress. During ISR, ATF4 translation is induced via an alternative ribosome translation re-initiation mechanism in response to EIF2S1/eIF-2-alpha phosphorylation, and stress-induced ATF4 acts as a master transcription factor of stress-responsive genes in order to promote cell recovery. Promotes the transcription of genes linked to amino acid sufficiency and resistance to oxidative stress to protect cells against metabolic consequences of ER oxidation. Activates the transcription of NLRP1, possibly in concert with other factors in response to ER stress. Activates the transcription of asparagine synthetase (ASNS) in response to amino acid deprivation or ER stress. However, when associated with DDIT3/CHOP, the transcriptional activation of the ASNS gene is inhibited in response to amino acid deprivation. Together with DDIT3/CHOP, mediates programmed cell death by promoting the expression of genes involved in cellular amino acid metabolic processes, mRNA translation and the terminal unfolded protein response (terminal UPR), a cellular response that elicits programmed cell death when ER stress is prolonged and unresolved. Activates the expression of COX7A2L/SCAF1 downstream of the EIF2AK3/PERK-mediated unfolded protein response, thereby promoting formation of respiratory chain supercomplexes and increasing mitochondrial oxidative phosphorylation. Together with DDIT3/CHOP, activates the transcription of the IRS-regulator TRIB3 and promotes ER stress-induced neuronal cell death by regulating the expression of BBC3/PUMA in response to ER stress. May cooperate with the UPR transcriptional regulator QRICH1 to regulate ER protein homeostasis which is critical for cell viability in response to ER stress. In the absence of stress, ATF4 translation is at low levels and it is required for normal metabolic processes such as embryonic lens formation, fetal liver hematopoiesis, bone development and synaptic plasticity. Acts as a regulator of osteoblast differentiation in response to phosphorylation by RPS6KA3/RSK2: phosphorylation in osteoblasts enhances transactivation activity and promotes expression of osteoblast-specific genes and post-transcriptionally regulates the synthesis of Type I collagen, the main constituent of the bone matrix. Cooperates with FOXO1 in osteoblasts to regulate glucose homeostasis through suppression of beta-cell production and decrease in insulin production. Activates transcription of SIRT4. Regulates the circadian expression of the core clock component PER2 and the serotonin transporter SLC6A4. Binds in a circadian time-dependent manner to the cAMP response elements (CRE) in the SLC6A4 and PER2 promoters and periodically activates the transcription of these genes. Mainly acts as a transcriptional activator in cellular stress adaptation, but it can also act as a transcriptional repressor: acts as a regulator of synaptic plasticity by repressing transcription, thereby inhibiting induction and maintenance of long-term memory. Regulates synaptic functions via interaction with DISC1 in neurons, which inhibits ATF4 transcription factor activity by disrupting ATF4 dimerization and DNA-binding. This Rattus norvegicus (Rat) protein is Cyclic AMP-dependent transcription factor ATF-4.